Here is a 369-residue protein sequence, read N- to C-terminus: Peptide chain release factor 2 (369 aa).

Q251 carries the N5-methylglutamine modification.

The protein belongs to the prokaryotic/mitochondrial release factor family. In terms of processing, methylated by PrmC. Methylation increases the termination efficiency of RF2.

The protein localises to the cytoplasm. Peptide chain release factor 2 directs the termination of translation in response to the peptide chain termination codons UGA and UAA. This chain is Peptide chain release factor 2 (prfB), found in Chlamydia muridarum (strain MoPn / Nigg).